Reading from the N-terminus, the 574-residue chain is VAO-type flavoprotein oxidase VAO615 (574 aa).

The first 17 residues, 1-17 (MPASLLRFLALAGTAVG), serve as a signal peptide directing secretion. Disulfide bonds link cysteine 28/cysteine 572, cysteine 64/cysteine 77, cysteine 108/cysteine 118, and cysteine 450/cysteine 476. Asparagine 47 carries N-linked (GlcNAc...) asparagine glycosylation. Asparagine 105 carries an N-linked (GlcNAc...) asparagine glycan. Residues 120–299 (LGNYPSYVVN…LSMTARLHRD (180 aa)) form the FAD-binding PCMH-type domain. N-linked (GlcNAc...) asparagine glycosylation is found at asparagine 129, asparagine 211, asparagine 310, asparagine 346, and asparagine 438. Residues 157 to 222 (HDYLGKSTGK…TGHRIVGGTC (66 aa)) constitute a cross-link (6-(S-cysteinyl)-8alpha-(pros-histidyl)-FAD (His-Cys)).

The protein belongs to the oxygen-dependent FAD-linked oxidoreductase family. The cofactor is FAD. In terms of processing, the FAD cofactor is bound via a bicovalent 6-S-cysteinyl, 8alpha-N1-histidyl FAD linkage.

The protein resides in the secreted. Functionally, probably oxidoreductase that, when reduced, rapidly reacts with molecular oxygen, a hallmark of flavoprotein oxidases. A large panel of alcohols, including carbohydrates, steroids and secondary alcohols were tested as potential substrates, but none has been identified so far. The protein is VAO-type flavoprotein oxidase VAO615 of Thermothelomyces thermophilus (strain ATCC 42464 / BCRC 31852 / DSM 1799) (Sporotrichum thermophile).